The primary structure comprises 572 residues: MNKLKSNFILNIVILFTILIFNINFINCENQKQQQHQQQQQQQQQQSSSTTTTLPIYSIKFSSETGFTIYSGNDSTSIAQSGFSNEMMTMGWAYLTITTNSQFEDSLQAEAAGYIEGYLTFEMIWQCWYNILVNEYQNQTIPNQVLNWANENIAYMKQQVATNENDPYWINIGLVLTQLSGMVDGYNAANQDPSRQLSFLDFILINMDADLGDISSTFNQSTSFSEISNFKKSMDHIKKTDHCSGLIKLTDDLTELYSAHTSWSSYINMLRIFKSYNFKFSSITNIKSKLTLFSGYPATIASLDDFYLLDTKLVVLETTNGLNNNDLYYLIKPESVLTWMRVIIANRLANGGQSWCETFERENSGTYNNQWMIVDYNKFVPGVKVRDGTLFVLEQVPGYIEFADVTNVLRTGYWPSYNIPYFETIFNMSGFNDELTDSSDYEAYEEDARSQIFRRDANKVYSLTDFQAIMRYNNFQNDPLSHGDAANQISSRFDLNSPDSQDYDAFGGVDSKVTSFSLVNQLLVIAQSGPTHDQEPPFQWSSANWSNIYPSIGMPNLYDFGWVNFTDISYNY.

Positions 1 to 28 (MNKLKSNFILNIVILFTILIFNINFINC) are cleaved as a signal peptide. N-linked (GlcNAc...) asparagine glycosylation is found at N73, N138, N219, N427, N544, and N564.

The protein belongs to the phospholipase B-like family.

Its subcellular location is the secreted. Functionally, probable phospholipase. The sequence is that of Phospholipase B-like protein B (plbB) from Dictyostelium discoideum (Social amoeba).